The primary structure comprises 1021 residues: MTKEKPSSTRVAKTQALDDLIMGTNSSSIVSKRSVERLYYPNELHFFRYFVNKFQRRAPLINRGYWLRLRAIDVIVRQFITTPEPGRRKVVINLGAGSDVLPWQSYHRYGDSCGDTLFIDVDYPDLMRKKRAIVLGTPQLSELLGEDPYVSEKETDHLLLRSDKYCQVGCDLRELETLRKCLESFLPLFECSVLFVAEVSVTYMDTISADALIQWASYIGQAEFCLLEQILPHGPDHPFASTMLKHFNKLNTSLKSVHQYPTVNSQRSRFEKRGWNSVDVWDLWEAWNSEVFLNSSERAALDDVEPFDEWEEFILFARHYIVLHATSYHRGGKGAGQQMLASPPGKHVKANMVATKSLGAPKRRFGSPLVASSPEGGQYLVHTLGMGINARLDSCDIYSIQESSTSLEMAPVGPSARICHTTTDLGQGDLLLVGGRASPSKAFSDCWVLKKSSNSWEKTFDLPVPLFRHSTVNLPGSSLALVLGGKTGPSEISSDYFIFHPVRGWLKCAVSGVSPNSTFGAFAIASTSLGSKNGHFEGLLAGGIDGEGKINNQAYFWTVDVTTHEPIIHFESVQNYDQHSWALSVFGAQTANIESLSFVCGGVGQDPSSQGQSMACLTVKGKSLAVHLVDLGEKAGQLPFMVGSATVSSGSQLVIVGGGATCFSMGTFWDTGVYKIDLEGVVSEMIPGRTIHNKPVVVGYQNSPKLTQPTTDGVYPGPQSNAFITAIPKIKLQSKSDFEKLVQNRKPVIIEGLDLGGCVEKWNSEYVIQSVGETKEVVVHECQTSTGKMDFNSKNFRYVTESFSSFMTKAARGEALYLRALSEEKPTEAPANLAEDFPGLADDFRLPEELGSVKDRMFSSVLRISGRANMWLHYDVMANVYTQIQGSKRMVLFPPTDVSHLAFAPGASSSSLDIFSALDTHQLASTNPHEAFLNPGDLLFIPAMWFHTASPVTDLSVAVNVFFRDLESGYSTGRDVYGNRDLAAYEKGRQDISRITKSFDRLPSEIRQFYLRRLADELLHE.

S-adenosyl-L-methionine-binding positions include Arg-68, Asp-122, 171-172 (DL), and Glu-198. One can recognise a JmjC domain in the interval 826-980 (PTEAPANLAE…STGRDVYGNR (155 aa)).

Belongs to the methyltransferase superfamily. LCMT family.

It carries out the reaction 7-[(3S)-3-amino-3-carboxypropyl]wyosine(37) in tRNA(Phe) + S-adenosyl-L-methionine = 7-[(3S)-(3-amino-3-methoxycarbonyl)propyl]wyosine(37) in tRNA(Phe) + S-adenosyl-L-homocysteine. It catalyses the reaction 7-[(3S)-(3-amino-3-methoxycarbonyl)propyl]wyosine(37) in tRNA(Phe) + S-adenosyl-L-methionine + CO2 = wybutosine(37) in tRNA(Phe) + S-adenosyl-L-homocysteine + 2 H(+). It functions in the pathway tRNA modification; wybutosine-tRNA(Phe) biosynthesis. Probable S-adenosyl-L-methionine-dependent methyltransferase that acts as a component of the wybutosine biosynthesis pathway. Wybutosine is a hyper modified guanosine with a tricyclic base found at the 3'-position adjacent to the anticodon of eukaryotic phenylalanine tRNA. May methylate the carboxyl group of leucine residues to form alpha-leucine ester residues. The protein is tRNA wybutosine-synthesizing protein 4 (PPM2) of Gibberella zeae (strain ATCC MYA-4620 / CBS 123657 / FGSC 9075 / NRRL 31084 / PH-1) (Wheat head blight fungus).